We begin with the raw amino-acid sequence, 619 residues long: DNA mismatch repair protein MutL (619 aa).

Belongs to the DNA mismatch repair MutL/HexB family.

Its function is as follows. This protein is involved in the repair of mismatches in DNA. It is required for dam-dependent methyl-directed DNA mismatch repair. May act as a 'molecular matchmaker', a protein that promotes the formation of a stable complex between two or more DNA-binding proteins in an ATP-dependent manner without itself being part of a final effector complex. This is DNA mismatch repair protein MutL from Xylella fastidiosa (strain M23).